The primary structure comprises 610 residues: UvrABC system protein C (610 aa).

A GIY-YIG domain is found at 13 to 92; the sequence is TLPGVYLMKN…IKQHKPRYNA (80 aa). Positions 204-239 constitute a UVR domain; that stretch reads KDVLKDLYEEMRLLSEQLEFEKANHLLRTIRYIEKT.

This sequence belongs to the UvrC family. In terms of assembly, interacts with UvrB in an incision complex.

Its subcellular location is the cytoplasm. Its function is as follows. The UvrABC repair system catalyzes the recognition and processing of DNA lesions. UvrC both incises the 5' and 3' sides of the lesion. The N-terminal half is responsible for the 3' incision and the C-terminal half is responsible for the 5' incision. The protein is UvrABC system protein C of Protochlamydia amoebophila (strain UWE25).